Reading from the N-terminus, the 116-residue chain is MSSTKNKGSDAEQQATIFLQQQQLTLLEKNYRCRFGEIDLIMQDGDTVVFVEVRMRVNQLFGGAAASITPAKQLKLTRAARHYLARCDEDFPCRFDAILISGNREIEWIQNAFDEG.

Belongs to the UPF0102 family.

This chain is UPF0102 protein Neut_1662, found in Nitrosomonas eutropha (strain DSM 101675 / C91 / Nm57).